Here is a 169-residue protein sequence, read N- to C-terminus: UPF0303 protein BMEI0598 (169 aa).

It belongs to the UPF0303 family.

This Brucella melitensis biotype 1 (strain ATCC 23456 / CCUG 17765 / NCTC 10094 / 16M) protein is UPF0303 protein BMEI0598.